The following is a 439-amino-acid chain: Adenylosuccinate synthetase (439 aa).

GTP contacts are provided by residues 14 to 20 (GDEGKGK) and 42 to 44 (GHT). Asp15 functions as the Proton acceptor in the catalytic mechanism. The Mg(2+) site is built by Asp15 and Gly42. Residues 15–18 (DEGK), 40–43 (NAGH), Thr130, Arg144, Gln225, Thr240, and Arg304 contribute to the IMP site. His43 (proton donor) is an active-site residue. 300-306 (TTTGRRR) provides a ligand contact to substrate. Residues Arg306, 332–334 (KLD), and 414–416 (SLG) each bind GTP.

The protein belongs to the adenylosuccinate synthetase family. As to quaternary structure, homodimer. Requires Mg(2+) as cofactor.

The protein resides in the cytoplasm. It carries out the reaction IMP + L-aspartate + GTP = N(6)-(1,2-dicarboxyethyl)-AMP + GDP + phosphate + 2 H(+). It functions in the pathway purine metabolism; AMP biosynthesis via de novo pathway; AMP from IMP: step 1/2. Its function is as follows. Plays an important role in the de novo pathway of purine nucleotide biosynthesis. Catalyzes the first committed step in the biosynthesis of AMP from IMP. The chain is Adenylosuccinate synthetase from Prochlorococcus marinus (strain MIT 9303).